Here is a 471-residue protein sequence, read N- to C-terminus: Mitochondrial distribution and morphology protein 10 (471 aa).

Residues Pro-429–Ser-455 are disordered. Residues Ala-444–Ser-455 are compositionally biased toward gly residues.

Belongs to the MDM10 family. Component of the ER-mitochondria encounter structure (ERMES) or MDM complex, composed of mmm1, mdm10, mdm12 and mdm34. Associates with the mitochondrial outer membrane sorting assembly machinery SAM(core) complex.

Its subcellular location is the mitochondrion outer membrane. Its function is as follows. Component of the ERMES/MDM complex, which serves as a molecular tether to connect the endoplasmic reticulum and mitochondria. Components of this complex are involved in the control of mitochondrial shape and protein biogenesis and may function in phospholipid exchange. mdm10 is involved in the late assembly steps of the general translocase of the mitochondrial outer membrane (TOM complex). Functions in the tom40-specific route of the assembly of outer membrane beta-barrel proteins, including the association of tom40 with the receptor tom22 and small TOM proteins. Can associate with the SAM(core) complex as well as the mdm12-mmm1 complex, both involved in late steps of the major beta-barrel assembly pathway, that is responsible for biogenesis of all outer membrane beta-barrel proteins. May act as a switch that shuttles between both complexes and channels precursor proteins into the tom40-specific pathway. Plays a role in mitochondrial morphology and in the inheritance of mitochondria. In Aspergillus fumigatus (strain ATCC MYA-4609 / CBS 101355 / FGSC A1100 / Af293) (Neosartorya fumigata), this protein is Mitochondrial distribution and morphology protein 10 (mdmB).